We begin with the raw amino-acid sequence, 445 residues long: ATP synthase subunit b-delta (445 aa).

Residues 1-168 (MSTFIGQLVG…PAAAEVERPV (168 aa)) are ATP synthase subunit b. Residues 4–24 (FIGQLVGFAAIVFLVWRYVVP) form a helical membrane-spanning segment. An ATP synthase subunit delta region spans residues 169–445 (AAKMRSASRR…LTAAEAQLPD (277 aa)).

It in the N-terminal section; belongs to the ATPase B chain family. In the C-terminal section; belongs to the ATPase delta chain family. F-type ATPases have 2 components, F(1) - the catalytic core - and F(0) - the membrane proton channel. F(1) has five subunits: alpha(3), beta(3), gamma(1), delta(1), epsilon(1). F(0) has three main subunits: a(1), b(2) and c(10-14). The alpha and beta chains form an alternating ring which encloses part of the gamma chain. F(1) is attached to F(0) by a central stalk formed by the gamma and epsilon chains, while a peripheral stalk is formed by the delta and b chains.

It is found in the cell membrane. F(1)F(0) ATP synthase produces ATP from ADP in the presence of a proton or sodium gradient. F-type ATPases consist of two structural domains, F(1) containing the extramembraneous catalytic core and F(0) containing the membrane proton channel, linked together by a central stalk and a peripheral stalk. During catalysis, ATP synthesis in the catalytic domain of F(1) is coupled via a rotary mechanism of the central stalk subunits to proton translocation. Its function is as follows. This fusion protein includes a component of the F(0) channel (subunit b) and of the F(1) subunit (subunit delta). Two copies of subunit b and one of delta together form the peripheral 'stator' stalk which links F(1) to F(0). The sequence is that of ATP synthase subunit b-delta (atpFH) from Mycobacterium ulcerans (strain Agy99).